Reading from the N-terminus, the 1395-residue chain is DNA-directed RNA polymerase subunit beta' (1395 aa).

Residues C70, C72, C85, and C88 each contribute to the Zn(2+) site. D460, D462, and D464 together coordinate Mg(2+). The Zn(2+) site is built by C814, C888, C895, and C898.

This sequence belongs to the RNA polymerase beta' chain family. The RNAP catalytic core consists of 2 alpha, 1 beta, 1 beta' and 1 omega subunit. When a sigma factor is associated with the core the holoenzyme is formed, which can initiate transcription. The cofactor is Mg(2+). It depends on Zn(2+) as a cofactor.

The catalysed reaction is RNA(n) + a ribonucleoside 5'-triphosphate = RNA(n+1) + diphosphate. Its function is as follows. DNA-dependent RNA polymerase catalyzes the transcription of DNA into RNA using the four ribonucleoside triphosphates as substrates. The polypeptide is DNA-directed RNA polymerase subunit beta' (Pseudoalteromonas atlantica (strain T6c / ATCC BAA-1087)).